The sequence spans 127 residues: Major sperm protein isoform beta (127 aa).

The residue at position 2 (Ala2) is an N-acetylalanine. Positions 9–126 (DINTQPGSKI…RRKNLPIEYN (118 aa)) constitute an MSP domain.

Forms filaments 10 nm wide, with a characteristic substructure repeating axially at 9 nm. In terms of tissue distribution, sperm.

It localises to the cell projection. It is found in the pseudopodium. The protein resides in the cytoplasm. The protein localises to the cytoskeleton. Its function is as follows. Central component in molecular interactions underlying sperm crawling. Forms an extensive filament system that extends from sperm villipoda, along the leading edge of the pseudopod. In Ascaris suum (Pig roundworm), this protein is Major sperm protein isoform beta.